Reading from the N-terminus, the 278-residue chain is Large ribosomal subunit protein uL2 (278 aa).

The segment at 218–278 (RPHNRGVVMN…IMRSRHQRKK (61 aa)) is disordered.

It belongs to the universal ribosomal protein uL2 family. As to quaternary structure, part of the 50S ribosomal subunit. Forms a bridge to the 30S subunit in the 70S ribosome.

One of the primary rRNA binding proteins. Required for association of the 30S and 50S subunits to form the 70S ribosome, for tRNA binding and peptide bond formation. It has been suggested to have peptidyltransferase activity; this is somewhat controversial. Makes several contacts with the 16S rRNA in the 70S ribosome. The protein is Large ribosomal subunit protein uL2 of Rhizobium etli (strain ATCC 51251 / DSM 11541 / JCM 21823 / NBRC 15573 / CFN 42).